Consider the following 223-residue polypeptide: Ubiquitin carboxyl-terminal hydrolase isozyme L1 (223 aa).

Met-1 carries the N-acetylmethionine modification. Residues 2–221 (QLKPMEINPE…VRFSAVALCK (220 aa)) enclose the UCH catalytic domain. The interval 5–10 (PMEINP) is interaction with ubiquitin. The active-site Nucleophile is Cys-90. Ser-125 is subject to Phosphoserine. The active-site Proton donor is the His-161. Residues 211 to 216 (EVRFSA) form an interaction with ubiquitin region. Cys-220 is lipidated: S-farnesyl cysteine. Positions 221-223 (KAA) are cleaved as a propeptide — removed in mature form.

It belongs to the peptidase C12 family. Monomer. Homodimer. Interacts with SNCA. Interacts with COPS5. Post-translationally, O-glycosylated. Found in neuronal cell bodies and processes throughout the neocortex (at protein level). Expressed in neurons and cells of the diffuse neuroendocrine system and their tumors. Weakly expressed in ovary. Down-regulated in brains from Parkinson disease and Alzheimer disease patients.

Its subcellular location is the cytoplasm. The protein localises to the endoplasmic reticulum membrane. The enzyme catalyses Thiol-dependent hydrolysis of ester, thioester, amide, peptide and isopeptide bonds formed by the C-terminal Gly of ubiquitin (a 76-residue protein attached to proteins as an intracellular targeting signal).. Its function is as follows. Deubiquitinase that plays a role in the regulation of several processes such as maintenance of synaptic function, cardiac function, inflammatory response or osteoclastogenesis. Abrogates the ubiquitination of multiple proteins including WWTR1/TAZ, EGFR, HIF1A and beta-site amyloid precursor protein cleaving enzyme 1/BACE1. In addition, recognizes and hydrolyzes a peptide bond at the C-terminal glycine of ubiquitin to maintain a stable pool of monoubiquitin that is a key requirement for the ubiquitin-proteasome and the autophagy-lysosome pathways. Regulates amyloid precursor protein/APP processing by promoting BACE1 degradation resulting in decreased amyloid beta production. Plays a role in the immune response by regulating the ability of MHC I molecules to reach cross-presentation compartments competent for generating Ag-MHC I complexes. Mediates the 'Lys-48'-linked deubiquitination of the transcriptional coactivator WWTR1/TAZ leading to its stabilization and inhibition of osteoclastogenesis. Deubiquitinates and stabilizes epidermal growth factor receptor EGFR to prevent its degradation and to activate its downstream mediators. Modulates oxidative activity in skeletal muscle by regulating key mitochondrial oxidative proteins. Enhances the activity of hypoxia-inducible factor 1-alpha/HIF1A by abrogateing its VHL E3 ligase-mediated ubiquitination and consequently inhibiting its degradation. The sequence is that of Ubiquitin carboxyl-terminal hydrolase isozyme L1 (UCHL1) from Homo sapiens (Human).